A 365-amino-acid polypeptide reads, in one-letter code: Probable secreted beta-glucosidase UTH1 (365 aa).

The N-terminal stretch at M1 to A17 is a signal peptide.

Belongs to the SUN family.

It localises to the mitochondrion outer membrane. Its subcellular location is the secreted. The protein resides in the cell wall. In terms of biological role, involved in aging, oxidative stress response, and in the regulation of mitochondrial biogenesis. Inactivation of UTH1 increases life span, leads to higher resistance to heat stress and against hydrogen peroxide, and increases sensitivity to the superoxide radical-generating drug paraquat and to copper. Also required for the selective autophagic degradation of mitochondria (mitophagy) in response to nitrogen starvation. Involved in the remodeling of the cell wall during the various phases of yeast culture development and under various environmental conditions and plays a role in septation. Involved in cell sensitivity to boric acid. The polypeptide is Probable secreted beta-glucosidase UTH1 (UTH1) (Saccharomyces cerevisiae (strain ATCC 204508 / S288c) (Baker's yeast)).